Consider the following 449-residue polypeptide: UDP-N-acetylmuramate--L-alanine ligase (449 aa).

An ATP-binding site is contributed by 118–124 (GTHGKTT).

This sequence belongs to the MurCDEF family.

The protein resides in the cytoplasm. It catalyses the reaction UDP-N-acetyl-alpha-D-muramate + L-alanine + ATP = UDP-N-acetyl-alpha-D-muramoyl-L-alanine + ADP + phosphate + H(+). It participates in cell wall biogenesis; peptidoglycan biosynthesis. Functionally, cell wall formation. In Flavobacterium johnsoniae (strain ATCC 17061 / DSM 2064 / JCM 8514 / BCRC 14874 / CCUG 350202 / NBRC 14942 / NCIMB 11054 / UW101) (Cytophaga johnsonae), this protein is UDP-N-acetylmuramate--L-alanine ligase.